The sequence spans 508 residues: Immunoglobulin G-binding protein A (508 aa).

The signal sequence occupies residues 1 to 36 (MKKKNIYSIRKLGVGIASVTLGTLLISGGVTPAANA). A YSIRK-G/S signaling motif motif is present at residues 7-18 (YSIRKLGVGIAS). Residues 37 to 92 (AQHDEAQQNAFYQVLNMPNLNADQRNGFIQSLKDDPSQSANVLGEAQKLNDSQAPK) form an Immunoglobulin-binding region E repeat. Residues 93–153 (ADAQQNKFNK…KKLNESQAPK (61 aa)) form an Immunoglobulin-binding region D repeat. One copy of the Immunoglobulin-binding region A repeat lies at 154–211 (ADNNFNKEQQNAFYEILNMPNLNEEQRNGFIQSLKDDPSQSANLLAEAKKLNESQAPK). One copy of the Immunoglobulin-binding region B repeat lies at 212–269 (ADNKFNKEQQNAFYEILHLPNLNEEQRNGFIQSLKDDPSQSANLLAEAKKLNDAQAPK). Residues 270–327 (ADNKFNKEQQNAFYEILHLPNLTEEQRNGFIQSLKDDPSVSKEILAEAKKLNDAQAPK) form an Immunoglobulin-binding region C repeat. Residues 318–412 (KKLNDAQAPK…GNKPGKEDGN (95 aa)) show a composition bias toward basic and acidic residues. Disordered stretches follow at residues 318–424 (KKLN…DTVN) and 459–479 (KKQP…ETGE). 12 repeat units span residues 333–340 (KPGKEDGN), 341–348 (KPGKEDGN), 349–356 (KPGKEDNK), 357–364 (KPGKEDGN), 365–372 (KPGKEDNK), 373–380 (KPGKEDGN), 381–388 (KPGKEDGN), 389–396 (KPGKEDGN), 397–405 (KPGKEDGNK), 406–413 (PGKEDGNG), 414–421 (VHVVKPGD), and 422–429 (TVNDIAKA). Positions 333-408 (KPGKEDGNKP…GKEDGNKPGK (76 aa)) are 12 X 8 AA approximate tandem repeats. Positions 413-457 (GVHVVKPGDTVNDIAKANGTTADKIAADNKLADKNMIKPGQELVV) constitute a LysM domain. The LPXTG sorting signal signature appears at 474–478 (LPETG). A Pentaglycyl murein peptidoglycan amidated threonine modification is found at Thr-477. The propeptide at 478–508 (GEENPFIGTTVFGGLSLALGAALLAGRRREL) is removed by sortase.

The protein belongs to the immunoglobulin-binding protein SpA family. As to quaternary structure, interacts with host TNFRSF1A; this interaction leads to the stimulation of both surface expression and shedding of TNFRSF1A.

The protein resides in the secreted. Its subcellular location is the cell wall. Its function is as follows. Plays a role in the inhibition of the host innate and adaptive immune responses. Possesses five immunoglobulin-binding domains that capture both the fragment crystallizable region (Fc region) and the Fab region (part of Ig that identifies antigen) of immunoglobulins. In turn, Staphylococcus aureus is protected from phagocytic killing via inhibition of Ig Fc region. In addition, the host elicited B-cell response is prevented due to a decrease of antibody-secreting cell proliferation that enter the bone marrow, thereby decreasing long-term antibody production. Inhibits osteogenesis by preventing osteoblast proliferation and expression of alkaline phosphatase, type I collagen, osteopontin and osteocalcin. Acts directly as a pro-inflammatory factor in the lung through its ability to bind and activate tumor necrosis factor alpha receptor 1/TNFRSF1A. This Staphylococcus aureus protein is Immunoglobulin G-binding protein A (spa).